The primary structure comprises 1412 residues: Erbin (1412 aa).

17 LRR repeats span residues threonine 23 to phenylalanine 44, threonine 47 to cysteine 68, serine 70 to leucine 91, asparagine 93 to cysteine 114, valine 116 to leucine 137, asparagine 139 to threonine 161, lysine 162 to leucine 183, glutamine 185 to leucine 206, glycine 208 to leucine 229, glutamine 231 to cysteine 252, asparagine 254 to leucine 275, asparagine 277 to leucine 298, serine 300 to leucine 321, asparagine 323 to tryptophan 344, asparagine 346 to methionine 367, lysine 369 to glutamine 391, and glutamine 392 to threonine 413. Phosphoserine occurs at positions 440 and 444. Disordered regions lie at residues cysteine 464–aspartate 489 and lysine 506–valine 542. Basic and acidic residues predominate over residues glutamate 470–leucine 480. Tyrosine 483 carries the phosphotyrosine modification. Threonine 485 bears the Phosphothreonine mark. Basic and acidic residues predominate over residues lysine 506–glycine 532. The segment covering valine 533–valine 542 has biased composition (low complexity). Phosphoserine occurs at positions 569, 598, 602, 603, and 620. Positions proline 615–cysteine 681 are disordered. Basic and acidic residues predominate over residues asparagine 632 to aspartate 641. The span at asparagine 650–serine 662 shows a compositional bias: low complexity. Polar residues predominate over residues arginine 663 to cysteine 681. At serine 715 the chain carries Phosphoserine. Positions glutamate 803–valine 867 are disordered. Residues glutamate 817–arginine 835 are compositionally biased toward polar residues. Phosphoserine occurs at positions 852, 857, and 872. Threonine 917 carries the phosphothreonine modification. At tyrosine 920 the chain carries Phosphotyrosine. Serine 931 is modified (phosphoserine). The residue at position 972 (tyrosine 972) is a Phosphotyrosine. Disordered regions lie at residues asparagine 997–tyrosine 1021 and glutamine 1075–valine 1192. A compositionally biased stretch (polar residues) spans glutamine 1075–valine 1086. Residue tyrosine 1104 is modified to Phosphotyrosine. A compositionally biased stretch (polar residues) spans methionine 1157 to lysine 1171. Phosphoserine occurs at positions 1158, 1179, and 1286. In terms of domain architecture, PDZ spans glutamate 1321–valine 1410.

This sequence belongs to the LAP (LRR and PDZ) protein family. In terms of assembly, interacts with ERBB2, BPAG1 and ITGB4. May favor the localization of ERBB2, by restricting its presence to the basolateral membrane of epithelial cells. Also found to interact with ARVCF and delta catenin. Interacts (via C-terminus) with DST Isoform 3 (via N-terminus). Interacts with NOD2 (via CARD domain). Highly expressed in brain, heart, kidney, muscle and stomach, followed by liver, spleen and intestine.

It is found in the cell junction. The protein localises to the hemidesmosome. The protein resides in the nucleus membrane. Its subcellular location is the basolateral cell membrane. Functionally, acts as an adapter for the receptor ERBB2, in epithelia. By binding the unphosphorylated 'Tyr-1248' of receptor ERBB2, it may contribute to stabilize this unphosphorylated state. Inhibits NOD2-dependent NF-kappa-B signaling and pro-inflammatory cytokine secretion. The protein is Erbin of Homo sapiens (Human).